Consider the following 211-residue polypeptide: Ribosomal RNA large subunit methyltransferase E (211 aa).

Residues Gly55, Trp57, Asp75, Asp93, and Asp117 each coordinate S-adenosyl-L-methionine. Lys157 acts as the Proton acceptor in catalysis.

The protein belongs to the class I-like SAM-binding methyltransferase superfamily. RNA methyltransferase RlmE family.

Its subcellular location is the cytoplasm. The enzyme catalyses uridine(2552) in 23S rRNA + S-adenosyl-L-methionine = 2'-O-methyluridine(2552) in 23S rRNA + S-adenosyl-L-homocysteine + H(+). In terms of biological role, specifically methylates the uridine in position 2552 of 23S rRNA at the 2'-O position of the ribose in the fully assembled 50S ribosomal subunit. The protein is Ribosomal RNA large subunit methyltransferase E of Methanothermobacter thermautotrophicus (strain ATCC 29096 / DSM 1053 / JCM 10044 / NBRC 100330 / Delta H) (Methanobacterium thermoautotrophicum).